The sequence spans 266 residues: MPDKLIEIMAHKRREIAPLIRPVTETELAQLDASRPKPPSFADALRRPDGTLAVISEIKRRSPSAGEIKAGASAVEQARRYRAAGADALSILTDTEFFGGTLADLSDVTTEFRDQRPAPPCLRKDFMVHPVQVAQAREAGASAILIIVRALDDAEIQALYSAAQAAGLDALFEVHHETELERALHHRARIIGVNNRDLAVFKTDLALSERLIPQFPRDVIAVSESGIFTGADARRVHAVGAHAVLVGEALMKAPDPAALIAEFRAR.

Belongs to the TrpC family.

The enzyme catalyses 1-(2-carboxyphenylamino)-1-deoxy-D-ribulose 5-phosphate + H(+) = (1S,2R)-1-C-(indol-3-yl)glycerol 3-phosphate + CO2 + H2O. It participates in amino-acid biosynthesis; L-tryptophan biosynthesis; L-tryptophan from chorismate: step 4/5. This Opitutus terrae (strain DSM 11246 / JCM 15787 / PB90-1) protein is Indole-3-glycerol phosphate synthase.